The primary structure comprises 205 residues: Protein GrpE (205 aa).

Residues 172 to 205 (KGSTGPGAPAEPAAAPNPYASNGADTGGSFDTKA) are disordered. Residues 177–195 (PGAPAEPAAAPNPYASNGA) are compositionally biased toward low complexity.

The protein belongs to the GrpE family. In terms of assembly, homodimer.

It localises to the cytoplasm. Functionally, participates actively in the response to hyperosmotic and heat shock by preventing the aggregation of stress-denatured proteins, in association with DnaK and GrpE. It is the nucleotide exchange factor for DnaK and may function as a thermosensor. Unfolded proteins bind initially to DnaJ; upon interaction with the DnaJ-bound protein, DnaK hydrolyzes its bound ATP, resulting in the formation of a stable complex. GrpE releases ADP from DnaK; ATP binding to DnaK triggers the release of the substrate protein, thus completing the reaction cycle. Several rounds of ATP-dependent interactions between DnaJ, DnaK and GrpE are required for fully efficient folding. This chain is Protein GrpE, found in Caulobacter sp. (strain K31).